Here is a 307-residue protein sequence, read N- to C-terminus: GTPase Era (307 aa).

Residues 7–181 (RCGWVALLGP…VKLVKSKLPV (175 aa)) form the Era-type G domain. The interval 15–22 (GPPNAGKS) is G1. A GTP-binding site is contributed by 15–22 (GPPNAGKS). Residues 41-45 (QTTRN) are G2. Residues 62 to 65 (DTPG) form a G3 region. GTP contacts are provided by residues 62-66 (DTPGI) and 130-133 (NKVD). A G4 region spans residues 130–133 (NKVD). Residues 160–162 (VSA) form a G5 region. Residues 212–290 (LRQELPYSVA…HLELWVKVRE (79 aa)) form the KH type-2 domain.

Belongs to the TRAFAC class TrmE-Era-EngA-EngB-Septin-like GTPase superfamily. Era GTPase family. Monomer.

It localises to the cytoplasm. Its subcellular location is the cell inner membrane. Functionally, an essential GTPase that binds both GDP and GTP, with rapid nucleotide exchange. Plays a role in 16S rRNA processing and 30S ribosomal subunit biogenesis and possibly also in cell cycle regulation and energy metabolism. The sequence is that of GTPase Era from Nitratidesulfovibrio vulgaris (strain DSM 19637 / Miyazaki F) (Desulfovibrio vulgaris).